The primary structure comprises 206 residues: FMN-dependent NADH:quinone oxidoreductase 4 (206 aa).

FMN is bound by residues S10 and 136 to 139; that span reads SSGG.

This sequence belongs to the azoreductase type 1 family. In terms of assembly, homodimer. It depends on FMN as a cofactor.

It carries out the reaction 2 a quinone + NADH + H(+) = 2 a 1,4-benzosemiquinone + NAD(+). The catalysed reaction is N,N-dimethyl-1,4-phenylenediamine + anthranilate + 2 NAD(+) = 2-(4-dimethylaminophenyl)diazenylbenzoate + 2 NADH + 2 H(+). Quinone reductase that provides resistance to thiol-specific stress caused by electrophilic quinones. Its function is as follows. Also exhibits azoreductase activity. Catalyzes the reductive cleavage of the azo bond in aromatic azo compounds to the corresponding amines. The chain is FMN-dependent NADH:quinone oxidoreductase 4 from Pseudomonas fluorescens (strain ATCC BAA-477 / NRRL B-23932 / Pf-5).